A 242-amino-acid chain; its full sequence is Tropomyosin-1 (242 aa).

Disordered regions lie at residues 1–31 (MDAIKKKMSAMKTKLEEADKQAQDAEDELTA) and 65–96 (TSLTEKYNEEEKKAEEGRRAHKELENRGQTDY). Residues 1 to 242 (MDAIKKKMSA…DELLLELASM (242 aa)) are a coiled coil. Basic and acidic residues-rich tracts occupy residues 13–23 (TKLEEADKQAQ) and 70–96 (KYNEEEKKAEEGRRAHKELENRGQTDY).

It belongs to the tropomyosin family. Homodimer. In terms of tissue distribution, expressed ubiquitously.

The protein is Tropomyosin-1 (TPM1) of Podocoryna carnea (Hydrozoan).